The chain runs to 514 residues: Protein spinster homolog 3 (514 aa).

Residues 1–22 form a disordered region; the sequence is MSTECLKPQTGGPQSQSLSQGG. Residues 9 to 21 show a composition bias toward low complexity; that stretch reads QTGGPQSQSLSQG. The next 12 membrane-spanning stretches (helical) occupy residues 54 to 74, 88 to 108, 116 to 136, 149 to 169, 176 to 196, 212 to 232, 264 to 284, 313 to 333, 347 to 367, 376 to 396, 415 to 435, and 453 to 473; these read VLCY…GVLL, GLLQ…FGYL, AILS…SFIS, FVGT…GDLF, CALA…YVLG, LMPC…PDVP, FVFS…LGFW, LIFG…GAEA, LICA…LILA, VFLA…ADIL, VAHV…SSVL, and SFLC…LTAL. A disordered region spans residues 482–514; sequence ARQPGKGTLDSKDIASRNTESQGLLSGTSTPTE. Positions 497 to 514 are enriched in polar residues; that stretch reads SRNTESQGLLSGTSTPTE.

It belongs to the major facilitator superfamily. Spinster (TC 2.A.1.49) family.

The protein localises to the membrane. Sphingolipid transporter. The sequence is that of Protein spinster homolog 3 (Spns3) from Mus musculus (Mouse).